The primary structure comprises 682 residues: Potassium-transporting ATPase ATP-binding subunit (682 aa).

4 helical membrane-spanning segments follow: residues 34–54, 62–82, 219–239, and 254–274; these read PVMFIVWIGSLLTTCISIAMA, ALFSAAISGWLWVTVLFANFA, IALTILLIALTIVFLLATATL, and VLVALLVCLIPTTIGGLLSAI. Asp307 functions as the 4-aspartylphosphate intermediate in the catalytic mechanism. ATP contacts are provided by residues Asp344, Glu348, 377-384, and Lys395; that span reads FTAQSRMS. Mg(2+) contacts are provided by Asp518 and Asp522. 3 helical membrane passes run 588–608, 616–636, and 662–682; these read FAIIPAAFAATYPQLNALNIM, AILSAVIFNALIIVFLIPLAL, and LLVPFIGIKVIDLLLTICGLV.

Belongs to the cation transport ATPase (P-type) (TC 3.A.3) family. Type IA subfamily. In terms of assembly, the system is composed of three essential subunits: KdpA, KdpB and KdpC.

The protein localises to the cell inner membrane. It catalyses the reaction K(+)(out) + ATP + H2O = K(+)(in) + ADP + phosphate + H(+). Functionally, part of the high-affinity ATP-driven potassium transport (or Kdp) system, which catalyzes the hydrolysis of ATP coupled with the electrogenic transport of potassium into the cytoplasm. This subunit is responsible for energy coupling to the transport system and for the release of the potassium ions to the cytoplasm. The polypeptide is Potassium-transporting ATPase ATP-binding subunit (Escherichia coli O81 (strain ED1a)).